Consider the following 450-residue polypeptide: NADH-quinone oxidoreductase subunit H (450 aa).

Transmembrane regions (helical) follow at residues 18–38 (WWLVLGKALAIFVFLVLTPLL), 91–111 (ILAPVIAAVPAFMAFAVIPFG), 128–148 (LPVAVLYVLAATSIGVYGIVL), 169–189 (VISYEIAMALSFAAVFLDAGT), 201–221 (HTWYVFLLLPSFLIYVTSMVG), 262–282 (VTVSALATTLFLGGWHAPFPL), 292–312 (WWPVLWFTLKVWGFLFVFVWL), 324–344 (FMGLGWKILIPISLVWVMIVA), and 358–378 (SIALVVAGLVVALVVVVLLWK). Positions 387–450 (APEKPVEPRG…TGPTQENSDD (64 aa)) are disordered. Positions 390–400 (KPVEPRGRAEL) are enriched in basic and acidic residues. The segment covering 433–450 (VSVTGAHSTGPTQENSDD) has biased composition (polar residues).

The protein belongs to the complex I subunit 1 family. As to quaternary structure, NDH-1 is composed of 14 different subunits. Subunits NuoA, H, J, K, L, M, N constitute the membrane sector of the complex.

It localises to the cell membrane. The catalysed reaction is a quinone + NADH + 5 H(+)(in) = a quinol + NAD(+) + 4 H(+)(out). NDH-1 shuttles electrons from NADH, via FMN and iron-sulfur (Fe-S) centers, to quinones in the respiratory chain. The immediate electron acceptor for the enzyme in this species is believed to be ubiquinone. Couples the redox reaction to proton translocation (for every two electrons transferred, four hydrogen ions are translocated across the cytoplasmic membrane), and thus conserves the redox energy in a proton gradient. This subunit may bind ubiquinone. The chain is NADH-quinone oxidoreductase subunit H from Rhodococcus jostii (strain RHA1).